A 179-amino-acid chain; its full sequence is Inosine/xanthosine triphosphatase (179 aa).

Position 71 (Glu-71) interacts with Mg(2+). 71–72 is a binding site for substrate; sequence EA.

It belongs to the YjjX NTPase family. In terms of assembly, homodimer. It depends on Mg(2+) as a cofactor. The cofactor is Mn(2+).

It carries out the reaction XTP + H2O = XDP + phosphate + H(+). The catalysed reaction is ITP + H2O = IDP + phosphate + H(+). Phosphatase that hydrolyzes non-canonical purine nucleotides such as XTP and ITP to their respective diphosphate derivatives. Probably excludes non-canonical purines from DNA/RNA precursor pool, thus preventing their incorporation into DNA/RNA and avoiding chromosomal lesions. This is Inosine/xanthosine triphosphatase from Shewanella sp. (strain ANA-3).